We begin with the raw amino-acid sequence, 364 residues long: Probable dual-specificity RNA methyltransferase RlmN (364 aa).

Catalysis depends on Glu107, which acts as the Proton acceptor. Residues 113–346 (HEYGNSVCVT…ATIRREQGSD (234 aa)) enclose the Radical SAM core domain. An intrachain disulfide couples Cys120 to Cys351. [4Fe-4S] cluster is bound by residues Cys127, Cys131, and Cys134. S-adenosyl-L-methionine contacts are provided by residues 177 to 178 (GE), Ser209, 232 to 234 (SLH), and Asn308. Residue Cys351 is the S-methylcysteine intermediate of the active site.

It belongs to the radical SAM superfamily. RlmN family. [4Fe-4S] cluster is required as a cofactor.

Its subcellular location is the cytoplasm. The catalysed reaction is adenosine(2503) in 23S rRNA + 2 reduced [2Fe-2S]-[ferredoxin] + 2 S-adenosyl-L-methionine = 2-methyladenosine(2503) in 23S rRNA + 5'-deoxyadenosine + L-methionine + 2 oxidized [2Fe-2S]-[ferredoxin] + S-adenosyl-L-homocysteine. It carries out the reaction adenosine(37) in tRNA + 2 reduced [2Fe-2S]-[ferredoxin] + 2 S-adenosyl-L-methionine = 2-methyladenosine(37) in tRNA + 5'-deoxyadenosine + L-methionine + 2 oxidized [2Fe-2S]-[ferredoxin] + S-adenosyl-L-homocysteine. Specifically methylates position 2 of adenine 2503 in 23S rRNA and position 2 of adenine 37 in tRNAs. Confers resistance to some classes of antibiotics. The chain is Probable dual-specificity RNA methyltransferase RlmN from Staphylococcus epidermidis (strain ATCC 12228 / FDA PCI 1200).